Reading from the N-terminus, the 326-residue chain is MASILELRSRIKSVNSTKKITKAQELIATSRITKAQSRVAAAKPYAEEITKVLSELASASASLDHPLLNERTDPKRAAVLVVTSDRGMCGGYNSNVLKEAEELFQLLRSEGKDPVIYVLGSKGLGYYTFRDRDLGGAWTGFSQDPGYSDAAKASRHLVDLFMAGSGSEVPAPNGEGTIEGVDELHIVYTRFVSMLTQSPEVRRMAPLEVMVSEEHVELGEDMLSNGHGSSNSEPVAGYNFEPEPDKLLGALLPKYISTRIYSSLLDAAASESAARRTAMKAATDNANELVNTLSRQANQARQAQITQEISEIVGGANALASSAGSD.

It belongs to the ATPase gamma chain family. F-type ATPases have 2 components, CF(1) - the catalytic core - and CF(0) - the membrane proton channel. CF(1) has five subunits: alpha(3), beta(3), gamma(1), delta(1), epsilon(1). CF(0) has three main subunits: a, b and c.

It is found in the cell membrane. Functionally, produces ATP from ADP in the presence of a proton gradient across the membrane. The gamma chain is believed to be important in regulating ATPase activity and the flow of protons through the CF(0) complex. The polypeptide is ATP synthase gamma chain (Rhodococcus opacus (strain B4)).